The sequence spans 39 residues: SPVCTPSGQPCQPNTQPCCNNAEEEQTINCNGNTVYRCA.

Intrachain disulfides connect C4/C19, C11/C30, and C18/C38.

Contains 3 disulfide bonds. In terms of tissue distribution, expressed by the venom gland.

It is found in the secreted. In terms of biological role, potent inhibitor of insect, but not mammalian, voltage-gated calcium channels (Cav). The polypeptide is Omega-actinopoditoxin-Mb1a (Missulena bradleyi (Eastern mouse spider)).